The sequence spans 118 residues: Class I hydrophobin 1 (118 aa).

The first 20 residues, M1 to A20, serve as a signal peptide directing secretion. Intrachain disulfides connect C34–C97, C41–C91, C42–C77, and C98–C111. N-linked (GlcNAc...) asparagine glycosylation is present at N54. An N-linked (GlcNAc...) asparagine glycan is attached at N115.

The protein belongs to the fungal hydrophobin family. As to quaternary structure, self-assembles to form functional amyloid fibrils called rodlets. Self-assembly into fibrillar rodlets occurs spontaneously at hydrophobic:hydrophilic interfaces and the rodlets further associate laterally to form amphipathic monolayers.

The protein resides in the secreted. Its subcellular location is the cell wall. Aerial growth, conidiation, and dispersal of filamentous fungi in the environment rely upon a capability of their secreting small amphipathic proteins called hydrophobins (HPBs) with low sequence identity. Class I can self-assemble into an outermost layer of rodlet bundles on aerial cell surfaces, conferring cellular hydrophobicity that supports fungal growth, development and dispersal; whereas Class II form highly ordered films at water-air interfaces through intermolecular interactions but contribute nothing to the rodlet structure. This Coprinopsis cinerea (strain Okayama-7 / 130 / ATCC MYA-4618 / FGSC 9003) (Inky cap fungus) protein is Class I hydrophobin 1.